The chain runs to 710 residues: Integrator complex subunit 10 (710 aa).

S231, S381, and S382 each carry phosphoserine. A Glycyl lysine isopeptide (Lys-Gly) (interchain with G-Cter in SUMO2) cross-link involves residue K464.

Belongs to the Integrator subunit 10 family. Component of the Integrator complex, composed of core subunits INTS1, INTS2, INTS3, INTS4, INTS5, INTS6, INTS7, INTS8, INTS9/RC74, INTS10, INTS11/CPSF3L, INTS12, INTS13, INTS14 and INTS15. The core complex associates with protein phosphatase 2A subunits PPP2CA and PPP2R1A, to form the Integrator-PP2A (INTAC) complex. INTS10 is part of the tail subcomplex, composed of INTS10, INTS13, INTS14 and INTS15.

Its subcellular location is the nucleus. In terms of biological role, component of the integrator complex, a multiprotein complex that terminates RNA polymerase II (Pol II) transcription in the promoter-proximal region of genes. The integrator complex provides a quality checkpoint during transcription elongation by driving premature transcription termination of transcripts that are unfavorably configured for transcriptional elongation: the complex terminates transcription by (1) catalyzing dephosphorylation of the C-terminal domain (CTD) of Pol II subunit POLR2A/RPB1 and SUPT5H/SPT5, (2) degrading the exiting nascent RNA transcript via endonuclease activity and (3) promoting the release of Pol II from bound DNA. The integrator complex is also involved in terminating the synthesis of non-coding Pol II transcripts, such as enhancer RNAs (eRNAs), small nuclear RNAs (snRNAs), telomerase RNAs and long non-coding RNAs (lncRNAs). Within the integrator complex, INTS10 is part of the integrator tail module that acts as a platform for the recruitment of transcription factors at promoters. May be not involved in the recruitment of cytoplasmic dynein to the nuclear envelope, probably as component of the integrator complex. In Homo sapiens (Human), this protein is Integrator complex subunit 10.